Here is a 412-residue protein sequence, read N- to C-terminus: Glutamate-pyruvate aminotransferase AlaC (412 aa).

K244 is modified (N6-(pyridoxal phosphate)lysine).

Belongs to the class-I pyridoxal-phosphate-dependent aminotransferase family. Homodimer. The cofactor is pyridoxal 5'-phosphate.

The protein localises to the cytoplasm. The enzyme catalyses L-alanine + 2-oxoglutarate = pyruvate + L-glutamate. It participates in amino-acid biosynthesis; L-alanine biosynthesis. Its function is as follows. Involved in the biosynthesis of alanine. Catalyzes the transamination of pyruvate by glutamate, leading to the formation of L-alanine and 2-oxoglutarate. Is also able to catalyze the reverse reaction. The sequence is that of Glutamate-pyruvate aminotransferase AlaC from Escherichia coli (strain K12).